The primary structure comprises 331 residues: tRNA-dihydrouridine(20/20a) synthase (331 aa).

Residues 18–20 and Gln-70 each bind FMN; that span reads PML. The Proton donor role is filled by Cys-100. Residues Lys-139, His-172, 212–214, and 234–235 each bind FMN; these read NGG and GR.

The protein belongs to the Dus family. DusA subfamily. FMN serves as cofactor.

It catalyses the reaction 5,6-dihydrouridine(20) in tRNA + NADP(+) = uridine(20) in tRNA + NADPH + H(+). The catalysed reaction is 5,6-dihydrouridine(20) in tRNA + NAD(+) = uridine(20) in tRNA + NADH + H(+). It carries out the reaction 5,6-dihydrouridine(20a) in tRNA + NADP(+) = uridine(20a) in tRNA + NADPH + H(+). The enzyme catalyses 5,6-dihydrouridine(20a) in tRNA + NAD(+) = uridine(20a) in tRNA + NADH + H(+). Functionally, catalyzes the synthesis of 5,6-dihydrouridine (D), a modified base found in the D-loop of most tRNAs, via the reduction of the C5-C6 double bond in target uridines. Specifically modifies U20 and U20a in tRNAs. In Escherichia coli O6:H1 (strain CFT073 / ATCC 700928 / UPEC), this protein is tRNA-dihydrouridine(20/20a) synthase.